A 283-amino-acid chain; its full sequence is (+)-O-methylkolavelool synthase (283 aa).

Residues glutamine 106, 129–130 (NA), and histidine 151 each bind S-adenosyl-L-methionine.

The protein belongs to the methyltransferase superfamily.

The enzyme catalyses (+)-kolavelool + S-adenosyl-L-methionine = (+)-O-methylkolavelool + S-adenosyl-L-homocysteine + H(+). Involved in the biosynthesis of the diterpene (+)-O-methylkolavelool. Catalyzes the transfer of a methyl group from S-adenosyl-L-methionine to the hydroxy group of (+)-kolavelool, forming (+)-O-methylkolavelool. The polypeptide is (+)-O-methylkolavelool synthase (Herpetosiphon aurantiacus (strain ATCC 23779 / DSM 785 / 114-95)).